The following is a 256-amino-acid chain: 5-keto-4-deoxy-D-glucarate aldolase (256 aa).

H50 (proton acceptor) is an active-site residue. Q151 is a binding site for substrate. Position 153 (E153) interacts with Mg(2+). Positions 178 and 179 each coordinate substrate. D179 is a Mg(2+) binding site.

This sequence belongs to the HpcH/HpaI aldolase family. KDGluc aldolase subfamily. In terms of assembly, homohexamer; trimer of dimers. Mg(2+) serves as cofactor.

It catalyses the reaction 5-dehydro-4-deoxy-D-glucarate = 2-hydroxy-3-oxopropanoate + pyruvate. The catalysed reaction is 2-dehydro-3-deoxy-D-glucarate = 2-hydroxy-3-oxopropanoate + pyruvate. Its pathway is carbohydrate acid metabolism; galactarate degradation; D-glycerate from galactarate: step 2/3. Catalyzes the reversible retro-aldol cleavage of both 5-keto-4-deoxy-D-glucarate and 2-keto-3-deoxy-D-glucarate to pyruvate and tartronic semialdehyde. This chain is 5-keto-4-deoxy-D-glucarate aldolase, found in Escherichia coli (strain K12 / DH10B).